The chain runs to 275 residues: 2,3,4,5-tetrahydropyridine-2,6-dicarboxylate N-succinyltransferase (275 aa).

Substrate-binding residues include R107 and D144.

Belongs to the transferase hexapeptide repeat family. As to quaternary structure, homotrimer.

It is found in the cytoplasm. The enzyme catalyses (S)-2,3,4,5-tetrahydrodipicolinate + succinyl-CoA + H2O = (S)-2-succinylamino-6-oxoheptanedioate + CoA. Its pathway is amino-acid biosynthesis; L-lysine biosynthesis via DAP pathway; LL-2,6-diaminopimelate from (S)-tetrahydrodipicolinate (succinylase route): step 1/3. The sequence is that of 2,3,4,5-tetrahydropyridine-2,6-dicarboxylate N-succinyltransferase from Polynucleobacter asymbioticus (strain DSM 18221 / CIP 109841 / QLW-P1DMWA-1) (Polynucleobacter necessarius subsp. asymbioticus).